The sequence spans 91 residues: Potassium channel toxin BuTXK-beta (91 aa).

The signal sequence occupies residues 1–20 (MQRNLVVLLLLGMVALSSCG). A propeptide spanning residues 21–27 (LREKHFQ) is cleaved from the precursor. The BetaSPN-type CS-alpha/beta domain maps to 54–91 (QFGCPAYQGYCDDHCQDIKKEEGFCHGMKCKCGIPMGF). 3 disulfides stabilise this stretch: Cys57-Cys78, Cys64-Cys83, and Cys68-Cys85.

The protein belongs to the long chain scorpion toxin family. Class 1 subfamily. Expressed by the venom gland.

It localises to the secreted. Functionally, inhibits voltage-gated potassium channel. The protein is Potassium channel toxin BuTXK-beta of Buthus israelis (Israeli scorpion).